The primary structure comprises 167 residues: Small ribosomal subunit protein uS5 (167 aa).

An S5 DRBM domain is found at 11 to 74 (LQEKLIAVNR…EKARRAMINV (64 aa)).

The protein belongs to the universal ribosomal protein uS5 family. Part of the 30S ribosomal subunit. Contacts proteins S4 and S8.

In terms of biological role, with S4 and S12 plays an important role in translational accuracy. Located at the back of the 30S subunit body where it stabilizes the conformation of the head with respect to the body. This is Small ribosomal subunit protein uS5 from Serratia proteamaculans (strain 568).